A 54-amino-acid polypeptide reads, in one-letter code: U7-ctenitoxin-Pk1a (54 aa).

Disulfide bonds link cysteine 3/cysteine 17, cysteine 10/cysteine 23, cysteine 14/cysteine 52, cysteine 16/cysteine 37, and cysteine 25/cysteine 35.

As to expression, expressed by the venom gland.

The protein localises to the secreted. In terms of biological role, blocks voltage-gated sodium channels (Nav). Causes immediate spastic paralysis and death in mice within 1 minute of injection at dose levels of 1.5 ug per mouse. The sequence is that of U7-ctenitoxin-Pk1a from Phoneutria keyserlingi (Brazilian wandering spider).